The chain runs to 186 residues: Pyridoxal 5'-phosphate synthase subunit PdxT (186 aa).

47–49 contacts L-glutamine; the sequence is GES. C76 functions as the Nucleophile in the catalytic mechanism. Residues R102 and 130 to 131 each bind L-glutamine; that span reads IR. Active-site charge relay system residues include H166 and E168.

It belongs to the glutaminase PdxT/SNO family. In terms of assembly, in the presence of PdxS, forms a dodecamer of heterodimers. Only shows activity in the heterodimer.

It catalyses the reaction aldehydo-D-ribose 5-phosphate + D-glyceraldehyde 3-phosphate + L-glutamine = pyridoxal 5'-phosphate + L-glutamate + phosphate + 3 H2O + H(+). The catalysed reaction is L-glutamine + H2O = L-glutamate + NH4(+). It functions in the pathway cofactor biosynthesis; pyridoxal 5'-phosphate biosynthesis. Catalyzes the hydrolysis of glutamine to glutamate and ammonia as part of the biosynthesis of pyridoxal 5'-phosphate. The resulting ammonia molecule is channeled to the active site of PdxS. The polypeptide is Pyridoxal 5'-phosphate synthase subunit PdxT (Staphylococcus epidermidis (strain ATCC 35984 / DSM 28319 / BCRC 17069 / CCUG 31568 / BM 3577 / RP62A)).